A 620-amino-acid polypeptide reads, in one-letter code: MEKFAPVAALLLLLLCFPVAFSGHDYGQALSKSLLFFEAQRSGVLPRNQRVTWRSHSGLTDGKSSGVNLVGGYYDAGDNVKFGLPMAFTVTMMAWSVIEYGNQLQANGELGNSIDAIKWGTDYFIKAHPEPNVLYGEVGDGNTDHYCWQRPEEMTTDRKAYRIDPSNPGSDLAGETAAAMAAASIVFRRSNPVYSRLLLTHAYQLFDFADKYRGKYDSSITVAQKYYRSVSGYNDELLWAAAWLYQASNNQFYLDYLGRNGDAMGGTGWSMTEFGWDVKYAGVQTLVAKFLMQGKAGRHAPVFRKYQEKADSFMCSLLGKSSRNIQKTPGGLIFRQRWNNMQFVTSASFLTTVYSDYLTSSRSNLRCAAGNVAPSQLLSFAKSQVDYILGDNPRATSYMVGYGNNFPQRVHHRGSSIVSVKVDRTFVTCRGGYATWFSRKGSDPNLLTGAIVGGPDAYDNFADRRDNYEQTEPATYNNAPLLGVLARLSSGHSGYSQFLPVVPAPVVRRPMPIRRPKVTTPVRASGPVAIVQKITSSWVSKGRTYYRYSTTVINKSSRPLKSLNLSIKNLYGPIWGLSRSGNSFGLPSWMHSLPSGKSLEFVYIHSTTPANVAVSSYTLA.

An N-terminal signal peptide occupies residues 1 to 22 (MEKFAPVAALLLLLLCFPVAFS). Asp-78 (nucleophile) is an active-site residue. Catalysis depends on residues His-411, Asp-463, and Glu-472. 2 N-linked (GlcNAc...) asparagine glycosylation sites follow: Asn-554 and Asn-564.

Belongs to the glycosyl hydrolase 9 (cellulase E) family.

The protein localises to the secreted. It catalyses the reaction Endohydrolysis of (1-&gt;4)-beta-D-glucosidic linkages in cellulose, lichenin and cereal beta-D-glucans.. The polypeptide is Endoglucanase 6 (Arabidopsis thaliana (Mouse-ear cress)).